The primary structure comprises 126 residues: Large-conductance mechanosensitive channel (126 aa).

2 consecutive transmembrane segments (helical) span residues 17 to 37 (VDLA…SSFI) and 70 to 90 (GLFL…FLII).

The protein belongs to the MscL family. In terms of assembly, homopentamer.

The protein localises to the cell inner membrane. Channel that opens in response to stretch forces in the membrane lipid bilayer. May participate in the regulation of osmotic pressure changes within the cell. This chain is Large-conductance mechanosensitive channel, found in Flavobacterium johnsoniae (strain ATCC 17061 / DSM 2064 / JCM 8514 / BCRC 14874 / CCUG 350202 / NBRC 14942 / NCIMB 11054 / UW101) (Cytophaga johnsonae).